A 530-amino-acid chain; its full sequence is MGARRWLVSGVGYRLEESLEYRTLVPEALSIWRMAGANRMLFDCFDVDSKAARRSVAILSSCLRIECWGRDVVLRALNSNGRALLAPLSEDCPAQVTCLRDGDTLHWRFPQEESHADEWRRLHGLSSLEALRRVLGTLGDAEGPVLLGGLFSFDLAEQFEPLPAPAEPARHCPDYLFLVPELLLDIDHLARRTSLQAFVHDPAGHDRLAASLRQCADEFHGAVEEASESPVAGVRAGNYQVDLDDASFARQVERLQAHVRAGDVFQIVPSRSFSMPCADPWRAYRQLCLRNPSPYRFFLDAGDFCLFGASPESALKYDAESREVELYPIAGTRPRGRDARGAIDAELDNRLEAELRLDAKEIAEHMMLVDLARNDLARVCRSGTRQVRDMLKVDRYSHVMHLVSRVAGELHGELDALHAYRACLNMGTLVGAPKVRAMQLLRQYEDGYRGSYGGAIGILDSAGNLDTSIVIRSAEVREGIARVRAGAGVVLDSDPRLEAEETRNKALAVLTAVAAAERERGERDAHHAVG.

331–332 (GT) is a substrate binding site. Position 364 (Glu-364) interacts with Mg(2+). Residues Tyr-452, Arg-472, 486–488 (GAG), and Gly-488 each bind substrate. Mg(2+) is bound at residue Glu-501.

The protein belongs to the anthranilate synthase component I family. As to quaternary structure, heterotetramer consisting of two non-identical subunits: a beta subunit (PhnB) and a large alpha subunit (PhnA). Mg(2+) is required as a cofactor.

It catalyses the reaction chorismate + L-glutamine = anthranilate + pyruvate + L-glutamate + H(+). Its pathway is secondary metabolite biosynthesis; pyocyanine biosynthesis. Functionally, part of a heterotetrameric complex that catalyzes the two-step biosynthesis of anthranilate, a precursor for Pseudomonas quinolone signal (2-heptyl-3-hydroxy-4-quinolone; PQS) production which is required to induce the genes for the biosynthesis of the virulence factor pyocyanine (PCN), a characteristic blue-green phenazine pigment produced by P.aeruginosa. In the first step, the glutamine-binding beta subunit (PhnB) of anthranilate synthase (AS) provides the glutamine amidotransferase activity which generates ammonia as a substrate that, along with chorismate, is used in the second step, catalyzed by the large alpha subunit of AS (PhnA) to produce anthranilate. The sequence is that of Anthranilate synthase component 1, pyocyanine specific from Pseudomonas aeruginosa (strain ATCC 15692 / DSM 22644 / CIP 104116 / JCM 14847 / LMG 12228 / 1C / PRS 101 / PAO1).